Reading from the N-terminus, the 153-residue chain is UPF0756 membrane protein lin1603 (153 aa).

A run of 4 helical transmembrane segments spans residues M6–I26, W54–F74, S80–A100, and L117–I137.

Belongs to the UPF0756 family.

The protein localises to the cell membrane. The protein is UPF0756 membrane protein lin1603 of Listeria innocua serovar 6a (strain ATCC BAA-680 / CLIP 11262).